A 471-amino-acid chain; its full sequence is ATP synthase subunit beta (471 aa).

153–160 lines the ATP pocket; the sequence is GGAGVGKT.

It belongs to the ATPase alpha/beta chains family. As to quaternary structure, F-type ATPases have 2 components, CF(1) - the catalytic core - and CF(0) - the membrane proton channel. CF(1) has five subunits: alpha(3), beta(3), gamma(1), delta(1), epsilon(1). CF(0) has four main subunits: a(1), b(1), b'(1) and c(9-12).

It is found in the cell membrane. The enzyme catalyses ATP + H2O + 4 H(+)(in) = ADP + phosphate + 5 H(+)(out). Produces ATP from ADP in the presence of a proton gradient across the membrane. The catalytic sites are hosted primarily by the beta subunits. This is ATP synthase subunit beta from Chloroflexus aurantiacus (strain ATCC 29364 / DSM 637 / Y-400-fl).